Here is an 821-residue protein sequence, read N- to C-terminus: Dapper homolog 1 (821 aa).

Residues 88–136 adopt a coiled-coil conformation; it reads LNTEEKLLEENILLLRKQLNCLRRRDAGLINQLQELDRQISDLRLDTET. 4 disordered regions span residues 288–312, 386–432, 564–615, and 627–655; these read SKPG…SSWH, QDAS…STTN, NSAS…KTKR, and ERHT…VLAK. Residues 388–400 are compositionally biased toward low complexity; the sequence is ASATSTEPSTASP. Over residues 401–432 the composition is skewed to polar residues; the sequence is QRQWSAESKGGTPQNGAYLSSSQPQNSYSTTN. 3 stretches are compositionally biased toward basic residues: residues 584–593, 601–615, and 639–649; these read DKHRTGSRRT, HLHK…KTKR, and AQRHHGHHRHH. Residues 818 to 821 carry the PDZ-binding motif; the sequence is MTTV.

It belongs to the dapper family. In terms of assembly, interacts with dvl2.

It is found in the cytoplasm. In terms of biological role, involved in regulation of intracellular signaling pathways during development. Specifically thought to play a role in canonical and/or non-canonical Wnt signaling pathways through interaction with DSH (Dishevelled) family proteins. Binds to dvl2 and may regulate the degradation of ctnnb1/beta-catenin, thereby modulating the transcriptional activation of target genes of the Wnt signaling pathway. Seems to activate the canonical Wnt signaling pathway. The protein is Dapper homolog 1 (dact1) of Danio rerio (Zebrafish).